The sequence spans 106 residues: Integration host factor subunit alpha (106 aa).

Belongs to the bacterial histone-like protein family. Heterodimer of an alpha and a beta chain.

Its function is as follows. This protein is one of the two subunits of integration host factor, a specific DNA-binding protein that functions in genetic recombination as well as in transcriptional and translational control. The protein is Integration host factor subunit alpha of Paramagnetospirillum magneticum (strain ATCC 700264 / AMB-1) (Magnetospirillum magneticum).